A 314-amino-acid chain; its full sequence is FHA domain-containing protein DDL (314 aa).

Residues 1 to 10 are compositionally biased toward low complexity; sequence MAPSSRSPSP. Residues 1-146 form a disordered region; sequence MAPSSRSPSP…NVEEDSVARM (146 aa). Positions 18–127 are enriched in basic and acidic residues; that stretch reads ARGEKEIGRS…AIASRHDEGS (110 aa). Ser133 is subject to Phosphoserine. An FHA domain is found at 219–282; sequence YLFGRERRIA…NKTYINESPI (64 aa).

As to quaternary structure, interacts with DCL1 (via N-terminus). Expressed in roots, lateral roots, vascular strands of roots and leaves, vegetative meristems, pollen and developing seeds.

It is found in the nucleus. Its function is as follows. Involved in the microRNA (miRNA) and short interfering RNA (siRNA) biogenesis. May facilitate DCL1 to access or recognize primary miRNAs. Binds RNA non-specifically. The polypeptide is FHA domain-containing protein DDL (DDL) (Arabidopsis thaliana (Mouse-ear cress)).